Reading from the N-terminus, the 511-residue chain is Inositol-3-phosphate synthase (511 aa).

24 residues coordinate NAD(+): glycine 70, asparagine 71, asparagine 72, aspartate 143, serine 179, isoleucine 180, glutamine 190, arginine 193, serine 230, alanine 231, asparagine 232, threonine 233, glycine 281, serine 282, aspartate 306, threonine 309, asparagine 340, asparagine 341, aspartate 342, lysine 355, glycine 393, aspartate 394, aspartate 422, and serine 423.

The protein belongs to the myo-inositol 1-phosphate synthase family. The cofactor is NAD(+).

It is found in the cytoplasm. It carries out the reaction D-glucose 6-phosphate = 1D-myo-inositol 3-phosphate. It functions in the pathway polyol metabolism; myo-inositol biosynthesis; myo-inositol from D-glucose 6-phosphate: step 1/2. In terms of biological role, key enzyme in myo-inositol biosynthesis pathway that catalyzes the conversion of glucose 6-phosphate to 1-myo-inositol 1-phosphate in a NAD-dependent manner. Rate-limiting enzyme in the synthesis of all inositol-containing compounds. This chain is Inositol-3-phosphate synthase (ino1), found in Dictyostelium discoideum (Social amoeba).